We begin with the raw amino-acid sequence, 422 residues long: UDP-N-acetylglucosamine 1-carboxyvinyltransferase (422 aa).

22-23 (KN) is a binding site for phosphoenolpyruvate. Arg94 contacts UDP-N-acetyl-alpha-D-glucosamine. Catalysis depends on Cys118, which acts as the Proton donor. At Cys118 the chain carries 2-(S-cysteinyl)pyruvic acid O-phosphothioketal. UDP-N-acetyl-alpha-D-glucosamine is bound by residues 123–127 (RPVDL), Asp309, and Ile331.

It belongs to the EPSP synthase family. MurA subfamily.

It is found in the cytoplasm. It catalyses the reaction phosphoenolpyruvate + UDP-N-acetyl-alpha-D-glucosamine = UDP-N-acetyl-3-O-(1-carboxyvinyl)-alpha-D-glucosamine + phosphate. Its pathway is cell wall biogenesis; peptidoglycan biosynthesis. Cell wall formation. Adds enolpyruvyl to UDP-N-acetylglucosamine. This chain is UDP-N-acetylglucosamine 1-carboxyvinyltransferase, found in Cereibacter sphaeroides (strain ATCC 17025 / ATH 2.4.3) (Rhodobacter sphaeroides).